The chain runs to 144 residues: Small ribosomal subunit protein uS9 (144 aa).

Thr2 is modified (N-acetylthreonine). A disordered region spans residues 124 to 144 (RRESKKFGGPGARARYQKSYR).

This sequence belongs to the universal ribosomal protein uS9 family.

This chain is Small ribosomal subunit protein uS9 (rps-16), found in Caenorhabditis elegans.